We begin with the raw amino-acid sequence, 418 residues long: Zinc finger protein 566 (418 aa).

Residues V6 to P77 enclose the KRAB domain. The C2H2-type 1; degenerate zinc finger occupies K169–H193. C2H2-type zinc fingers lie at residues Y199–H221, F227–H249, Y255–H277, Y283–H305, Y311–H333, Y339–H361, and Y367–H389. Glycyl lysine isopeptide (Lys-Gly) (interchain with G-Cter in SUMO2) cross-links involve residues K314 and K328.

This sequence belongs to the krueppel C2H2-type zinc-finger protein family.

Its subcellular location is the nucleus. In terms of biological role, may be involved in transcriptional regulation. This is Zinc finger protein 566 (ZNF566) from Pan troglodytes (Chimpanzee).